The sequence spans 116 residues: Evasin P1180 (116 aa).

Residues 1–25 (MARNWSFRVIFVSAMWCALLKFATL) form the signal peptide. 4 disulfide bridges follow: C38–C58, C54–C95, C71–C100, and C90–C109. Residues N45, N73, and N104 are each glycosylated (N-linked (GlcNAc...) asparagine).

It localises to the secreted. Its function is as follows. Salivary chemokine-binding protein which binds to host chemokines CCL2, CCL3, CCL4, CCL8 and CCL18. The protein is Evasin P1180 of Amblyomma triste (Neotropical tick).